The sequence spans 396 residues: Flavohemoprotein (396 aa).

The Globin domain maps to 1 to 136 (MLDAQTIATV…LANVFINREA (136 aa)). Position 85 (histidine 85) interacts with heme b. Active-site charge relay system residues include tyrosine 95 and glutamate 135. Residues 147–396 (GGWEGTRDFR…YECFGPHKVL (250 aa)) form a reductase region. Positions 150–255 (EGTRDFRIVA…VAPAGDFFMA (106 aa)) constitute an FAD-binding FR-type domain. FAD-binding positions include tyrosine 188 and 204–207 (RQYS). 268–273 (GVGQTP) provides a ligand contact to NADP(+). Residue 389 to 392 (CFGP) coordinates FAD.

This sequence belongs to the globin family. Two-domain flavohemoproteins subfamily. It in the C-terminal section; belongs to the flavoprotein pyridine nucleotide cytochrome reductase family. In terms of assembly, monomer. It depends on FAD as a cofactor. Requires heme b as cofactor.

The protein localises to the cytoplasm. It carries out the reaction 2 nitric oxide + NADPH + 2 O2 = 2 nitrate + NADP(+) + H(+). The catalysed reaction is 2 nitric oxide + NADH + 2 O2 = 2 nitrate + NAD(+) + H(+). Is involved in NO detoxification in an aerobic process, termed nitric oxide dioxygenase (NOD) reaction that utilizes O(2) and NAD(P)H to convert NO to nitrate, which protects the bacterium from various noxious nitrogen compounds. Therefore, plays a central role in the inducible response to nitrosative stress. Its function is as follows. In the presence of oxygen and NADH, HMP has NADH oxidase activity, which leads to the generation of superoxide and H(2)O(2), both in vitro and in vivo, and it has been suggested that HMP might act as an amplifier of superoxide stress. Under anaerobic conditions, HMP also exhibits nitric oxide reductase and FAD reductase activities. However, all these reactions are much lower than NOD activity. Functionally, various electron acceptors are also reduced by HMP in vitro, including dihydropterine, ferrisiderophores, ferric citrate, cytochrome c, nitrite, S-nitrosoglutathione, and alkylhydroperoxides. However, it is unknown if these reactions are of any biological significance in vivo. This is Flavohemoprotein (hmp) from Escherichia coli (strain K12).